We begin with the raw amino-acid sequence, 784 residues long: Phosphate transporter PHO1 homolog 1 (784 aa).

Topologically, residues 1 to 387 are cytoplasmic; the sequence is MVKFTKQFEG…HHRKESHSVT (387 aa). An SPX domain is found at 2–335; it reads VKFTKQFEGQ…GKQILPIYLK (334 aa). A helical transmembrane segment spans residues 388–408; the sequence is FFIGLFTGCFVALLAGYIIVA. Topologically, residues 409-429 are extracellular; sequence HLTGMYRQHSANTFYMETAYP. Residues 430 to 450 traverse the membrane as a helical segment; sequence VLSMFGLLFLHLFLYGCNIFM. The Cytoplasmic segment spans residues 451–474; it reads WRKARINYSFIFELGSKNELKYRD. Residues 475–495 form a helical membrane-spanning segment; the sequence is VFLICTASMSAIAGVMFVHLS. Over 496 to 507 the chain is Extracellular; it reads LLEKGYSFRQVQ. The helical transmembrane segment at 508 to 528 threads the bilayer; it reads VIPGLLLLGFLLILICPLNIF. At 529–654 the chain is on the cytoplasmic side; sequence YKSSRYRLIS…TKVAYEKERS (126 aa). Positions 593–784 constitute an EXS domain; that stretch reads MRVKYYRDLA…LPFREVDEED (192 aa). The helical transmembrane segment at 655-675 threads the bilayer; that stretch reads LGWLCLVVAMSSVATIYQLYW. Residues 676-703 lie on the Extracellular side of the membrane; that stretch reads DFVKDWGLLQHNSNNPWLRNQLMLRQKS. A helical membrane pass occupies residues 704-724; sequence IYYFSMVLNLVLRLAWLQTVL. The Cytoplasmic segment spans residues 725–784; sequence HSSFEHVDYRVTGLFLAALEVIRRGQWNFYRLENEHLNNAGKFRAVKTVPLPFREVDEED.

This sequence belongs to the SYG1 (TC 2.A.94) family. As to expression, expressed in vascular cylinder of roots, leaves, stems, petals, sepals and filaments. Expressed in receptacle, stigma apex and anther connective tissue.

The protein localises to the cell membrane. Its function is as follows. Contributes to the loading of inorganic phosphate (Pi) into the root xylem vessels. In Arabidopsis thaliana (Mouse-ear cress), this protein is Phosphate transporter PHO1 homolog 1 (PHO1-H1).